The primary structure comprises 247 residues: Protein GrpE (247 aa).

The span at 31-49 (QKEETKTTNKDNQKEDETV) shows a compositional bias: basic and acidic residues. The segment at 31–79 (QKEETKTTNKDNQKEDETVKNQSNQSNQSNQTKQTNTKQQKHQPKENSH) is disordered. A compositionally biased stretch (low complexity) spans 50-68 (KNQSNQSNQSNQTKQTNTK).

This sequence belongs to the GrpE family. Homodimer.

The protein resides in the cytoplasm. In terms of biological role, participates actively in the response to hyperosmotic and heat shock by preventing the aggregation of stress-denatured proteins, in association with DnaK and GrpE. It is the nucleotide exchange factor for DnaK and may function as a thermosensor. Unfolded proteins bind initially to DnaJ; upon interaction with the DnaJ-bound protein, DnaK hydrolyzes its bound ATP, resulting in the formation of a stable complex. GrpE releases ADP from DnaK; ATP binding to DnaK triggers the release of the substrate protein, thus completing the reaction cycle. Several rounds of ATP-dependent interactions between DnaJ, DnaK and GrpE are required for fully efficient folding. In Onion yellows phytoplasma (strain OY-M), this protein is Protein GrpE.